The chain runs to 122 residues: Large ribosomal subunit protein uL14 (122 aa).

It belongs to the universal ribosomal protein uL14 family. Part of the 50S ribosomal subunit. Forms a cluster with proteins L3 and L19. In the 70S ribosome, L14 and L19 interact and together make contacts with the 16S rRNA in bridges B5 and B8.

Functionally, binds to 23S rRNA. Forms part of two intersubunit bridges in the 70S ribosome. The chain is Large ribosomal subunit protein uL14 from Halalkalibacterium halodurans (strain ATCC BAA-125 / DSM 18197 / FERM 7344 / JCM 9153 / C-125) (Bacillus halodurans).